Consider the following 276-residue polypeptide: Rho-related protein racO (276 aa).

A GTP-binding site is contributed by 11–18; sequence GDGLIGKT. An Effector region motif is present at residues 34-42; sequence YSSFDSEYL. GTP is bound by residues 60-64 and 124-127; these read ENDGF and IKTD. A disordered region spans residues 199 to 276; it reads FKNNNNNNNY…NKTTNKCKIS (78 aa). Over residues 200–270 the composition is skewed to low complexity; that stretch reads KNNNNNNNYN…SYKNHNNKTT (71 aa). A Cysteine methyl ester modification is found at Cys273. The S-geranylgeranyl cysteine moiety is linked to residue Cys273. A propeptide spans 274 to 276 (removed in mature form); it reads KIS.

The protein belongs to the small GTPase superfamily. Rho family.

Its subcellular location is the cell membrane. This Dictyostelium discoideum (Social amoeba) protein is Rho-related protein racO (racO).